Reading from the N-terminus, the 222-residue chain is Leucyl/phenylalanyl-tRNA--protein transferase (222 aa).

It belongs to the L/F-transferase family.

The protein resides in the cytoplasm. The enzyme catalyses N-terminal L-lysyl-[protein] + L-leucyl-tRNA(Leu) = N-terminal L-leucyl-L-lysyl-[protein] + tRNA(Leu) + H(+). It carries out the reaction N-terminal L-arginyl-[protein] + L-leucyl-tRNA(Leu) = N-terminal L-leucyl-L-arginyl-[protein] + tRNA(Leu) + H(+). It catalyses the reaction L-phenylalanyl-tRNA(Phe) + an N-terminal L-alpha-aminoacyl-[protein] = an N-terminal L-phenylalanyl-L-alpha-aminoacyl-[protein] + tRNA(Phe). Functionally, functions in the N-end rule pathway of protein degradation where it conjugates Leu, Phe and, less efficiently, Met from aminoacyl-tRNAs to the N-termini of proteins containing an N-terminal arginine or lysine. The sequence is that of Leucyl/phenylalanyl-tRNA--protein transferase from Legionella pneumophila (strain Paris).